Here is a 467-residue protein sequence, read N- to C-terminus: Asparagine--tRNA ligase (467 aa).

The protein belongs to the class-II aminoacyl-tRNA synthetase family. In terms of assembly, homodimer.

The protein resides in the cytoplasm. It carries out the reaction tRNA(Asn) + L-asparagine + ATP = L-asparaginyl-tRNA(Asn) + AMP + diphosphate + H(+). This chain is Asparagine--tRNA ligase, found in Haemophilus ducreyi (strain 35000HP / ATCC 700724).